The following is a 554-amino-acid chain: Intraflagellar transport protein 56 (554 aa).

The disordered stretch occupies residues 1–24; the sequence is MMLSRAKPAVGRGVQHTDKRKKKG. 4 TPR repeats span residues 57–90, 92–125, 151–184, and 468–501; these read EDTNLWIGYCAFHLGDYKRALEEYENATKEENCN, EVWVNLACTYFFLGMYKQAEAAGFKASKSRLQNR, TEDQLSLASIHYMRSHYQEAIDIYKRILLDNREY, and ANDCYKMGQFYYSAKAFDVLERLDPNPEYWEGKR.

This sequence belongs to the IFT56 family. In terms of assembly, component of the IFT complex B. Interacts with IFT46; the interaction is direct.

The protein localises to the cell projection. It is found in the cilium. Its function is as follows. Component of the intraflagellar transport (IFT) complex B required for transport of proteins in the motile cilium. Required for transport of specific ciliary cargo proteins related to motility, while it is neither required for IFT complex B assembly or motion nor for cilium assembly. Required for efficient coupling between the accumulation of GLI2 and GLI3 at the ciliary tips and their dissociation from the negative regulator SUFU. Plays a key role in maintaining the integrity of the IFT complex B and the proper ciliary localization of the IFT complex B components. Not required for IFT complex A ciliary localization or function. Essential for maintaining proper microtubule organization within the ciliary axoneme. The protein is Intraflagellar transport protein 56 of Homo sapiens (Human).